Consider the following 139-residue polypeptide: Large ribosomal subunit protein uL16 (139 aa).

Belongs to the universal ribosomal protein uL16 family. Part of the 50S ribosomal subunit.

Functionally, binds 23S rRNA and is also seen to make contacts with the A and possibly P site tRNAs. The protein is Large ribosomal subunit protein uL16 of Chlorobium phaeobacteroides (strain DSM 266 / SMG 266 / 2430).